A 467-amino-acid chain; its full sequence is FAD-dependent oxidoreductase dbaF (467 aa).

Residues 1-20 form the signal peptide; that stretch reads MKSVLASGALTLAFSLAALA. N-linked (GlcNAc...) asparagine glycosylation is found at Asn96, Asn134, Asn337, Asn391, and Asn451.

The protein belongs to the beta-cyclopiazonate dehydrogenase family. FAD is required as a cofactor.

It participates in secondary metabolite biosynthesis. Its function is as follows. FAD-dependent oxidoreductase; part of the gene cluster that mediates the biosynthesis of the antibiotic 2,4-dihydroxy-3-methyl-6-(2-oxopropyl)benzaldehyde (DHMBA) and its derivatives. The direct non-reducing polyketide synthase dbaI product is 2,4-dihydroxy-3-methyl-6-(2-oxopropyl)benzaldehyde (DHMBA), produced by condensation of one acetyl-CoA starter unit with 4 malonyl-CoA units and one methylation step. The FAD-dependent monooxygenase dbaH is responsible for the synthesis of yellow pigments derived from the oxidation of DHMBA. The roles of dbaB, C, E and F have still to be determined. The protein is FAD-dependent oxidoreductase dbaF of Emericella nidulans (strain FGSC A4 / ATCC 38163 / CBS 112.46 / NRRL 194 / M139) (Aspergillus nidulans).